A 473-amino-acid polypeptide reads, in one-letter code: Bifunctional protein HldE (473 aa).

Residues Met1–Ile317 form a ribokinase region. Asn195–Glu198 is an ATP binding site. Asp264 is a catalytic residue. A cytidylyltransferase region spans residues Met343 to Asn473.

This sequence in the N-terminal section; belongs to the carbohydrate kinase PfkB family. It in the C-terminal section; belongs to the cytidylyltransferase family. In terms of assembly, homodimer.

It carries out the reaction D-glycero-beta-D-manno-heptose 7-phosphate + ATP = D-glycero-beta-D-manno-heptose 1,7-bisphosphate + ADP + H(+). The catalysed reaction is D-glycero-beta-D-manno-heptose 1-phosphate + ATP + H(+) = ADP-D-glycero-beta-D-manno-heptose + diphosphate. The protein operates within nucleotide-sugar biosynthesis; ADP-L-glycero-beta-D-manno-heptose biosynthesis; ADP-L-glycero-beta-D-manno-heptose from D-glycero-beta-D-manno-heptose 7-phosphate: step 1/4. Its pathway is nucleotide-sugar biosynthesis; ADP-L-glycero-beta-D-manno-heptose biosynthesis; ADP-L-glycero-beta-D-manno-heptose from D-glycero-beta-D-manno-heptose 7-phosphate: step 3/4. In terms of biological role, catalyzes the phosphorylation of D-glycero-D-manno-heptose 7-phosphate at the C-1 position to selectively form D-glycero-beta-D-manno-heptose-1,7-bisphosphate. Its function is as follows. Catalyzes the ADP transfer from ATP to D-glycero-beta-D-manno-heptose 1-phosphate, yielding ADP-D-glycero-beta-D-manno-heptose. The sequence is that of Bifunctional protein HldE from Nitrosococcus oceani (strain ATCC 19707 / BCRC 17464 / JCM 30415 / NCIMB 11848 / C-107).